Here is a 278-residue protein sequence, read N- to C-terminus: MCRRPDCGFSFSPGPVVLLWCCLLLPIVSSVAVSVAPTAAEKVPAECPELTRRCLLGEVFQGDKYESWLRPLVNVTRRDGPLSQLIRYRPVTPEAANSVLLDDAFLDTLALLYNNPDQLRALLTLLSSDTAPRWMTVMRGYSECGDGSPAVYTCVDDLCRGYDLTRLSYGRSIFTEHVLGFELVPPSLFNVVVAIRNEATRTNRAVRLPVSTAAAPEGITLFYGLYNAVKEFCLRHQLDPPLLRHLDKYYAGLPPELKQTRVNLPAHSRYGPQAVDAR.

An N-terminal signal peptide occupies residues 1–30 (MCRRPDCGFSFSPGPVVLLWCCLLLPIVSS). Positions 43 to 256 (VPAECPELTR…DKYYAGLPPE (214 aa)) constitute a gL betaherpesvirus-type domain. Cysteine 154 and cysteine 159 are oxidised to a cystine.

This sequence belongs to the herpesviridae glycoprotein L (gL) family. Betaherpesvirinae gL subfamily. In terms of assembly, interacts with glycoprotein H (gH); this interaction is necessary for the correct processing and cell surface expression of gH. Forms the envelope pentamer complex (PC) composed of gH, gL, UL128, UL130, and UL131A. The pentamer interacts with host NRP2. Forms the envelope trimer complex composed of gH, gL, and gO. The trimer interacts with host PDGFRA.

The protein localises to the virion membrane. Its subcellular location is the host cell membrane. It is found in the host Golgi apparatus. It localises to the host trans-Golgi network. Its function is as follows. The heterodimer glycoprotein H-glycoprotein L is required for the fusion of viral and plasma membranes leading to virus entry into the host cell. Acts as a functional inhibitor of gH and maintains gH in an inhibited form. Upon binding to host integrins, gL dissociates from gH leading to activation of the viral fusion glycoproteins gB and gH. In human cytomegalovirus, forms two distincts complexes to mediate viral entry, a trimer and a pentamer at the surface of the virion envelope. The gH-gL-gO trimer is required for infection in fibroblasts by interacting with host PDGFRA. The gH-gL-UL128-UL130-UL131A pentamer is essential for viral entry in epithelial, endothelial and myeloid cells via interaction with host NRP2. The polypeptide is Envelope glycoprotein L (Human cytomegalovirus (strain AD169) (HHV-5)).